Here is a 1030-residue protein sequence, read N- to C-terminus: Beta-galactosidase (1030 aa).

Substrate is bound by residues N99 and D197. D197 serves as a coordination point for Na(+). The Mg(2+) site is built by E411, H413, and E456. Substrate-binding positions include E456 and 532-535 (EYAH). The Proton donor role is filled by E456. The Nucleophile role is filled by E532. Position 592 (N592) interacts with Mg(2+). Na(+)-binding residues include F596 and N599. Residues N599 and W1004 each contribute to the substrate site.

This sequence belongs to the glycosyl hydrolase 2 family. In terms of assembly, homotetramer. Mg(2+) serves as cofactor. It depends on Na(+) as a cofactor.

It carries out the reaction Hydrolysis of terminal non-reducing beta-D-galactose residues in beta-D-galactosides.. This is Beta-galactosidase from Photobacterium profundum (strain SS9).